The following is a 411-amino-acid chain: Proteasome-activating nucleotidase 2 (411 aa).

Residues isoleucine 35–leucine 75 adopt a coiled-coil conformation. Residues glycine 196–methionine 201 and histidine 335 each bind ATP. The tract at residues serine 408 to glutamine 411 is docks into pockets in the proteasome alpha-ring to cause gate opening.

This sequence belongs to the AAA ATPase family. Homohexamer. The hexameric complex has a two-ring architecture resembling a top hat that caps the 20S proteasome core at one or both ends. Upon ATP-binding, the C-terminus of PAN interacts with the alpha-rings of the proteasome core by binding to the intersubunit pockets.

It localises to the cytoplasm. Functionally, ATPase which is responsible for recognizing, binding, unfolding and translocation of substrate proteins into the archaeal 20S proteasome core particle. Is essential for opening the gate of the 20S proteasome via an interaction with its C-terminus, thereby allowing substrate entry and access to the site of proteolysis. Thus, the C-termini of the proteasomal ATPase function like a 'key in a lock' to induce gate opening and therefore regulate proteolysis. Unfolding activity requires energy from ATP hydrolysis, whereas ATP binding alone promotes ATPase-20S proteasome association which triggers gate opening, and supports translocation of unfolded substrates. This chain is Proteasome-activating nucleotidase 2, found in Halobacterium salinarum (strain ATCC 700922 / JCM 11081 / NRC-1) (Halobacterium halobium).